We begin with the raw amino-acid sequence, 156 residues long: Ribosomal RNA large subunit methyltransferase H (156 aa).

Residues Leu-73, Gly-104, and 123–128 contribute to the S-adenosyl-L-methionine site; that span reads LSPLTL.

It belongs to the RNA methyltransferase RlmH family. In terms of assembly, homodimer.

The protein resides in the cytoplasm. The enzyme catalyses pseudouridine(1915) in 23S rRNA + S-adenosyl-L-methionine = N(3)-methylpseudouridine(1915) in 23S rRNA + S-adenosyl-L-homocysteine + H(+). In terms of biological role, specifically methylates the pseudouridine at position 1915 (m3Psi1915) in 23S rRNA. The chain is Ribosomal RNA large subunit methyltransferase H from Aliivibrio fischeri (strain ATCC 700601 / ES114) (Vibrio fischeri).